The sequence spans 489 residues: Hydantoin permease (489 aa).

Helical transmembrane passes span 30–50, 58–78, 104–124, 144–164, 167–187, 207–227, 258–278, 299–321, 339–359, 362–382, 405–424, and 428–445; these read FSLA…IAAG, VWQV…LLFF, LIPI…QTWL, LWIV…ITFI, MNVF…YLML, MPFS…VVSI, LGMV…MVLV, AILF…NLLS, GVIV…AGVL, FLNL…SDYF, RGVN…VSFL, and LMFV…IPAM. The Na(+) site is built by Ala38 and Ile41. Position 121 (Gln121) interacts with substrate. Substrate is bound at residue Gly219. Na(+) contacts are provided by Ala309, Ser312, and Thr313. Asn318 is a binding site for substrate. The tract at residues 468 to 489 is disordered; the sequence is PIGPVAPADESATANTKEQNQR. Positions 479 to 489 are enriched in polar residues; it reads ATANTKEQNQR.

Belongs to the purine-cytosine permease (2.A.39) family.

It is found in the membrane. Inhibited by dinitrophenol, 5-(2-naphthylmethyl)-D-hydantoin (D-NMH), 5-(2-naphthylmethyl)-L-hydantoin (L-NMH), 5-bromovinylhydantoin (BVH) and 5-indolylmethyl-L-hydantoin (L-IMH). The affinity of benzyl-hydantoin is increased over 10-fold in the presence of 15 mM of sodium. Nucleobase-proton symporter that mediates the sodium-dependent binding and uptake of 5-aryl-substituted hydantoin compounds. 5-indolyl methyl hydantoin and 5-benzyl hydantoin are the preferred substrates, with selectivity for a hydrophobic substituent in position 5 of hydantoin and for the L isomer over the D isomer. The chain is Hydantoin permease from Microbacterium maritypicum (Microbacterium liquefaciens).